A 610-amino-acid chain; its full sequence is Transducer of Cdc42-dependent actin assembly protein 2 homolog (610 aa).

In terms of domain architecture, F-BAR spans 1–267 (MIPVSRFFTV…EVGKIDAEGD (267 aa)). The disordered stretch occupies residues 283 to 315 (APFEIEDLGDPKNCDSRTNDSADGSGGKLLKSS). The segment covering 291-302 (GDPKNCDSRTND) has biased composition (basic and acidic residues). Positions 352–429 (SKPAHVRLSC…IHNLKEFYAM (78 aa)) constitute an REM-1 domain. Residues 355–385 (AHVRLSCLRSKIRDMEKQLEQAIQGREGITR) are a coiled coil. Disordered regions lie at residues 436–487 (EGQE…SSKN) and 499–519 (LISSPKTSKSSTPTPLRRRAE). Residues 437–449 (GQERSFGGRDTPD) show a composition bias toward basic and acidic residues. Low complexity predominate over residues 453–464 (SMSGSSTNQSSS). A compositionally biased stretch (polar residues) spans 475-487 (AGNSSSADDSSKN). Residues 501–513 (SSPKTSKSSTPTP) are compositionally biased toward low complexity. The SH3 domain maps to 547–610 (ETAVTVTALF…VPTSYLQFPQ (64 aa)).

The protein belongs to the FNBP1 family. In terms of assembly, interacts (via SH3 domain) with wsp-1 and abi-1. Interacts with cdc-42 and (via SH3 domain) with wve-1.

The protein resides in the cell junction. It is found in the cell membrane. It localises to the cytoplasmic vesicle. The protein localises to the cytoplasm. Its subcellular location is the recycling endosome. Functionally, plays a role in protein trafficking, actin organization and embryonic morphogenesis. Potentially acts as a cdc-42 effector. May play a role in egg laying. Together with toca-1, is required for protein trafficking regulating yolk protein clathrin-mediated endocytosis by oocytes during oogenesis and retrograde recycling and the sorting of recycling endosome cargo proteins such as mig-14. Also, together with toca-2, controls the distribution of actin at cell junctions. The chain is Transducer of Cdc42-dependent actin assembly protein 2 homolog from Caenorhabditis elegans.